Consider the following 82-residue polypeptide: Delta-conotoxin-like SmVIA (82 aa).

Positions 1–22 are cleaved as a signal peptide; sequence MKLTCVMIVAVLFLIAWTFVTA. Residues 23 to 49 constitute a propeptide that is removed on maturation; sequence DDSRNGLKNLFPKARHEMKNPEASKLN. Disulfide bonds link cysteine 54/cysteine 69, cysteine 61/cysteine 73, and cysteine 68/cysteine 77. A 4-hydroxyproline modification is found at proline 65.

It belongs to the conotoxin O1 superfamily. As to expression, expressed by the venom duct.

It localises to the secreted. Delta-conotoxins bind to site 6 of voltage-gated sodium channels (Nav) and inhibit the inactivation process. This Conus stercusmuscarum (Fly-specked cone) protein is Delta-conotoxin-like SmVIA.